The chain runs to 380 residues: Cytochrome b (380 aa).

4 helical membrane passes run F33–M53, W77–I98, W113–L133, and F178–L198. Heme b contacts are provided by H83 and H97. Positions 182 and 196 each coordinate heme b. H201 lines the a ubiquinone pocket. The next 4 helical transmembrane spans lie at Y226–A246, L288–H308, L320–G340, and F347–P367.

This sequence belongs to the cytochrome b family. The cytochrome bc1 complex contains 3 respiratory subunits (MT-CYB, CYC1 and UQCRFS1), 2 core proteins (UQCRC1 and UQCRC2) and probably 6 low-molecular weight proteins. Requires heme b as cofactor.

It is found in the mitochondrion inner membrane. Its function is as follows. Component of the ubiquinol-cytochrome c reductase complex (complex III or cytochrome b-c1 complex) that is part of the mitochondrial respiratory chain. The b-c1 complex mediates electron transfer from ubiquinol to cytochrome c. Contributes to the generation of a proton gradient across the mitochondrial membrane that is then used for ATP synthesis. This is Cytochrome b (mt-cyb) from Gadus morhua (Atlantic cod).